The sequence spans 356 residues: GDSL esterase/lipase At2g36325 (356 aa).

The N-terminal stretch at 1-26 (MNITKLTPWFLFSCLILLSDYIKVNS) is a signal peptide. The N-linked (GlcNAc...) asparagine glycan is linked to N25. S54 serves as the catalytic Nucleophile. N-linked (GlcNAc...) asparagine glycans are attached at residues N165, N185, and N240. Residues D334 and H337 contribute to the active site.

Belongs to the 'GDSL' lipolytic enzyme family.

It is found in the secreted. The polypeptide is GDSL esterase/lipase At2g36325 (Arabidopsis thaliana (Mouse-ear cress)).